A 558-amino-acid polypeptide reads, in one-letter code: MDTLAGILQVASVVLVLVLVHRPLGDLMARMYESRHDTRVERGIYRLIGVDPRSEQTWPAYLRAVLAFSLVGVLVVYGMQRLQAFLPYALGLPAVPEGISFNTAVSFVTNTNWQSYSPEATMGYTVQLAGLAVQNFVSAAVGIAVAIALVRGFARTRSGTIGNMWVDLIRGSLRLLLPLSLVTAVVLIAGGVIQNFAGFQDVQTLAGGTQTIPGGPVASQEAIKMLGTNGGGFFNANSAHPFEDPTAWTSAFQVLLMLVIPFSLPRTFGKMVGDTRQGTAIAAVMATIAVASLTALTLFELQGAGSAPMAAGAAMEGKEQRVGIIGSALFGTVSTLTSTGAVNSMHDSYTALGGMMPMLNMMLGEVAPGGVGSGLYGMLVLAVIAVFVAGLLVGRTPEYLGKKIGPREIKLASLYILVTPILVLVGTALSFAIPAVRDDVEGTSILNSGLHGLSEVVYAFTSAANNNGSAFAGLTASTPWFTTALGVAMLLGRFVPIVLVLALAGSLAAQDRIPTTSGTLPTHRPQFVGLLIGVTVIVTALTYFPVLALGPLAEGLAS.

Transmembrane regions (helical) follow at residues 1 to 21 (MDTL…VLVH), 58 to 78 (WPAY…VVYG), 85 to 105 (FLPY…NTAV), 130 to 150 (GLAV…IALV), 179 to 199 (LSLV…FAGF), 245 to 265 (PTAW…FSLP), 279 to 299 (TAIA…LTLF), 374 to 394 (GLYG…LLVG), 416 to 436 (ILVT…IPAV), 484 to 504 (ALGV…LALA), and 527 to 547 (FVGL…FPVL).

Belongs to the KdpA family. As to quaternary structure, the system is composed of three essential subunits: KdpA, KdpB and KdpC.

It is found in the cell membrane. Its function is as follows. Part of the high-affinity ATP-driven potassium transport (or Kdp) system, which catalyzes the hydrolysis of ATP coupled with the electrogenic transport of potassium into the cytoplasm. This subunit binds the extracellular potassium ions and delivers the ions to the membrane domain of KdpB through an intramembrane tunnel. This is Potassium-transporting ATPase potassium-binding subunit from Clavibacter sepedonicus (Clavibacter michiganensis subsp. sepedonicus).